The primary structure comprises 101 residues: Urease subunit gamma (101 aa).

This sequence belongs to the urease gamma subunit family. In terms of assembly, heterotrimer of UreA (gamma), UreB (beta) and UreC (alpha) subunits. Three heterotrimers associate to form the active enzyme.

It is found in the cytoplasm. The catalysed reaction is urea + 2 H2O + H(+) = hydrogencarbonate + 2 NH4(+). The protein operates within nitrogen metabolism; urea degradation; CO(2) and NH(3) from urea (urease route): step 1/1. The chain is Urease subunit gamma from Ureaplasma urealyticum serovar 10 (strain ATCC 33699 / Western).